The following is a 160-amino-acid chain: uncharacterized protein (160 aa).

An N-terminal signal peptide occupies residues 1 to 23; the sequence is MSIPHSVFSALLVFVALATTTLA. The Cytoplasmic portion of the chain corresponds to 24 to 132; it reads STEACLPTNK…DPNTAYWSSD (109 aa). Residues 133 to 155 traverse the membrane as a helical segment; that stretch reads LFGFYTTPTNVTVEMTGYLIWSM. The Extracellular segment spans residues 156–160; the sequence is GNRRR.

It to yeast protein FLO1.

The protein resides in the cell membrane. This is an uncharacterized protein from Saccharomyces cerevisiae (strain ATCC 204508 / S288c) (Baker's yeast).